The sequence spans 207 residues: MLENYSLLLSVGYCITKPEVVCKLEHGQVLWILEEESPSQSHLDCCIDDDLMEKRQENQDQHLQKVDFVNNKTLTMDRNGVLGKTFSLDTNPILSRKIRGNCDSSGMNLNNISELIISNRSSFVRNPAECNVRGKFLLCMKRENPYARGKPLEYDGNGKAVSQNEDLFRHQYIQTLKQCFEYNQCGKAFHEEAACSTHKRVCSWETL.

Residues methionine 1–leucine 43 enclose the KRAB domain. The C2H2-type; atypical zinc finger occupies lysine 177–cysteine 202.

The protein belongs to the krueppel C2H2-type zinc-finger protein family.

It localises to the nucleus. Functionally, may be involved in transcriptional regulation. The polypeptide is Zinc finger protein 487 (ZNF487) (Homo sapiens (Human)).